Reading from the N-terminus, the 111-residue chain is BET1-like protein (111 aa).

Residues 1 to 86 (MADWARAQSP…MARSGRDNRK (86 aa)) are Cytoplasmic-facing. 2 positions are modified to phosphoserine: serine 9 and serine 37. The t-SNARE coiled-coil homology domain occupies 15–77 (EILDRENKRM…TGSVKRFSTM (63 aa)). The chain crosses the membrane as a helical; Anchor for type IV membrane protein span at residues 87–107 (LLCGMAVGLIVAFFILSYFLS). Topologically, residues 108–111 (RART) are lumenal.

In terms of assembly, component of a SNARE complex consisting of STX5, YKT6, GOSR1 and BET1L. Interacts with STX5.

It localises to the golgi apparatus membrane. The protein resides in the golgi apparatus. It is found in the trans-Golgi network membrane. Its function is as follows. Vesicle SNARE required for targeting and fusion of retrograde transport vesicles with the Golgi complex. Required for the integrity of the Golgi complex. In Pongo abelii (Sumatran orangutan), this protein is BET1-like protein.